The primary structure comprises 319 residues: MKRIGVLTSGGDSPGMNAAIRAVVRKAIFHDIEVYGIYHGYAGLISGHIEKLELGSVGDIIPRGGTKLYTARCLEFKDPEVRLKGIEQLKKHGIEGLVVIGGDGSYQGAKKLTEQGFPCVGVPGTIDNDIPGTDFTIGFDTALNTVIDAIDKIRDTATSHERTYVIEVMGRHAGDIALWAGLADGAETILIPEEEYDMDDVIARLKRGSERGKKHSIIVVAEGVGSAIDIGKHIEEATNFDTRVTVLGHVQRGGSPSAQDRVLASRLGARAVELLIAGKGGRCVGIQDNKLVDHDIIEALAQKHTIDKDMYQLSKELSI.

Glycine 11 lines the ATP pocket. 21 to 25 (RAVVR) serves as a coordination point for ADP. Residues 72–73 (RC) and 102–105 (GDGS) each bind ATP. Mg(2+) is bound at residue aspartate 103. 125–127 (TID) contributes to the substrate binding site. Catalysis depends on aspartate 127, which acts as the Proton acceptor. Residue arginine 154 coordinates ADP. Substrate contacts are provided by residues arginine 162 and 169 to 171 (MGR). Residues 185 to 187 (GAE), arginine 211, and 213 to 215 (KKH) contribute to the ADP site. Substrate-binding positions include glutamate 222, arginine 243, and 249-252 (HVQR).

This sequence belongs to the phosphofructokinase type A (PFKA) family. ATP-dependent PFK group I subfamily. Prokaryotic clade 'B1' sub-subfamily. In terms of assembly, homotetramer. The cofactor is Mg(2+).

The protein localises to the cytoplasm. It catalyses the reaction beta-D-fructose 6-phosphate + ATP = beta-D-fructose 1,6-bisphosphate + ADP + H(+). It participates in carbohydrate degradation; glycolysis; D-glyceraldehyde 3-phosphate and glycerone phosphate from D-glucose: step 3/4. Allosterically activated by ADP and other diphosphonucleosides, and allosterically inhibited by phosphoenolpyruvate. In terms of biological role, catalyzes the phosphorylation of D-fructose 6-phosphate to fructose 1,6-bisphosphate by ATP, the first committing step of glycolysis. The polypeptide is ATP-dependent 6-phosphofructokinase (Bacillus cereus (strain ATCC 14579 / DSM 31 / CCUG 7414 / JCM 2152 / NBRC 15305 / NCIMB 9373 / NCTC 2599 / NRRL B-3711)).